Consider the following 317-residue polypeptide: Melanocyte-stimulating hormone receptor (317 aa).

The tract at residues Met1 to Pro26 is disordered. At Met1–Glu37 the chain is on the extracellular side. Residue Asn29 is glycosylated (N-linked (GlcNAc...) asparagine). Residues Val38–Ile63 form a helical membrane-spanning segment. The Cytoplasmic segment spans residues Ala64 to Pro72. The helical transmembrane segment at Met73–Leu93 threads the bilayer. Residues Glu94–Asn118 are Extracellular-facing. A helical transmembrane segment spans residues Val119–Met140. Residues Asp141 to Arg163 are Cytoplasmic-facing. Residues Ala164–Cys183 traverse the membrane as a helical segment. Residues Asp184–Cys191 lie on the Extracellular side of the membrane. A helical membrane pass occupies residues Leu192–Leu211. The Cytoplasmic segment spans residues Thr212 to Ala240. A helical membrane pass occupies residues Ala241 to Val266. The Extracellular portion of the chain corresponds to Cys267–Asn279. Residues Phe280–Phe300 traverse the membrane as a helical segment. The Cytoplasmic segment spans residues Arg301–Trp317.

Belongs to the G-protein coupled receptor 1 family. As to quaternary structure, interacts with MGRN1, but does not undergo MGRN1-mediated ubiquitination; this interaction competes with GNAS-binding and thus inhibits agonist-induced cAMP production. Interacts with OPN3; the interaction results in a decrease in MC1R-mediated cAMP signaling and ultimately a decrease in melanin production in melanocytes.

The protein resides in the cell membrane. In terms of biological role, receptor for MSH (alpha, beta and gamma) and ACTH. The activity of this receptor is mediated by G proteins which activate adenylate cyclase. Mediates melanogenesis, the production of eumelanin (black/brown) and phaeomelanin (red/yellow), via regulation of cAMP signaling in melanocytes. This chain is Melanocyte-stimulating hormone receptor (MC1R), found in Hapalemur griseus (Gray gentle lemur).